The sequence spans 484 residues: UDP-glucose:undecaprenyl-phosphate glucose-1-phosphate transferase (484 aa).

Helical transmembrane passes span 37–57 (MVVA…VPAA), 59–79 (YRVA…LFPL), 93–113 (VVLG…ALIV), 122–142 (GWVG…RTLL), and 299–319 (ILAV…AVGV).

The protein belongs to the bacterial sugar transferase family.

Its subcellular location is the cell inner membrane. It catalyses the reaction di-trans,octa-cis-undecaprenyl phosphate + UDP-alpha-D-glucose = alpha-D-glucosyl di-trans,octa-cis-undecaprenyl diphosphate + UMP. It participates in glycan biosynthesis; xanthan biosynthesis. Functionally, is the initiating enzyme for the synthesis of the exopolysaccharide xanthan. Catalyzes the transfer of the glucose-1-phosphate moiety from UDP-Glc onto the carrier lipid undecaprenyl phosphate (C55-P), forming a phosphoanhydride bond yielding to glucosyl-pyrophosphoryl-undecaprenol (Glc-PP-C55). This is UDP-glucose:undecaprenyl-phosphate glucose-1-phosphate transferase (gumD) from Xanthomonas campestris pv. campestris.